The chain runs to 901 residues: HTH-type transcriptional regulator MalT (901 aa).

39 to 46 (SPAGYGKT) contacts ATP. The HTH luxR-type domain occupies 829–894 (ELIRTSPLTQ…DAVQHAQQLL (66 aa)). Residues 853–872 (NEQIAGELEVAATTIKTHIR) constitute a DNA-binding region (H-T-H motif).

This sequence belongs to the MalT family. Monomer in solution. Oligomerizes to an active state in the presence of the positive effectors ATP and maltotriose.

With respect to regulation, activated by ATP and maltotriose, which are both required for DNA binding. In terms of biological role, positively regulates the transcription of the maltose regulon whose gene products are responsible for uptake and catabolism of malto-oligosaccharides. Specifically binds to the promoter region of its target genes, recognizing a short DNA motif called the MalT box. The chain is HTH-type transcriptional regulator MalT from Escherichia coli (strain K12 / MC4100 / BW2952).